Here is a 141-residue protein sequence, read N- to C-terminus: Large ribosomal subunit protein uL16 (141 aa).

The protein belongs to the universal ribosomal protein uL16 family. In terms of assembly, part of the 50S ribosomal subunit.

Binds 23S rRNA and is also seen to make contacts with the A and possibly P site tRNAs. This is Large ribosomal subunit protein uL16 from Geobacillus thermodenitrificans (strain NG80-2).